The primary structure comprises 152 residues: FAD synthase (152 aa).

ATP contacts are provided by residues 9 to 10, 14 to 17, and aspartate 92; these read TF and HPGH.

Belongs to the archaeal FAD synthase family. As to quaternary structure, homodimer. Requires a divalent metal cation as cofactor.

The enzyme catalyses FMN + ATP + H(+) = FAD + diphosphate. It participates in cofactor biosynthesis; FAD biosynthesis; FAD from FMN: step 1/1. Catalyzes the transfer of the AMP portion of ATP to flavin mononucleotide (FMN) to produce flavin adenine dinucleotide (FAD) coenzyme. The sequence is that of FAD synthase from Ferroglobus placidus (strain DSM 10642 / AEDII12DO).